Reading from the N-terminus, the 458-residue chain is Bifunctional protein GlmU (458 aa).

Residues 1 to 229 (MTNYAIILAA…FNESLGVNDR (229 aa)) form a pyrophosphorylase region. UDP-N-acetyl-alpha-D-glucosamine-binding positions include 8–11 (LAAG), lysine 22, glutamine 72, and 77–78 (GT). Residue aspartate 102 coordinates Mg(2+). UDP-N-acetyl-alpha-D-glucosamine-binding residues include glycine 139, glutamate 154, asparagine 169, and asparagine 227. Asparagine 227 is a binding site for Mg(2+). Residues 230–250 (VALATAESVMRRRINKAHMIN) are linker. Residues 251–458 (GVTFQNPDAT…AKRLPHYPQK (208 aa)) form an N-acetyltransferase region. Residues arginine 332 and lysine 350 each coordinate UDP-N-acetyl-alpha-D-glucosamine. The active-site Proton acceptor is the histidine 362. Positions 365 and 376 each coordinate UDP-N-acetyl-alpha-D-glucosamine. Residues alanine 379, 385–386 (NY), serine 404, alanine 422, and arginine 439 contribute to the acetyl-CoA site.

The protein in the N-terminal section; belongs to the N-acetylglucosamine-1-phosphate uridyltransferase family. In the C-terminal section; belongs to the transferase hexapeptide repeat family. As to quaternary structure, homotrimer. The cofactor is Mg(2+).

The protein resides in the cytoplasm. It carries out the reaction alpha-D-glucosamine 1-phosphate + acetyl-CoA = N-acetyl-alpha-D-glucosamine 1-phosphate + CoA + H(+). It catalyses the reaction N-acetyl-alpha-D-glucosamine 1-phosphate + UTP + H(+) = UDP-N-acetyl-alpha-D-glucosamine + diphosphate. Its pathway is nucleotide-sugar biosynthesis; UDP-N-acetyl-alpha-D-glucosamine biosynthesis; N-acetyl-alpha-D-glucosamine 1-phosphate from alpha-D-glucosamine 6-phosphate (route II): step 2/2. The protein operates within nucleotide-sugar biosynthesis; UDP-N-acetyl-alpha-D-glucosamine biosynthesis; UDP-N-acetyl-alpha-D-glucosamine from N-acetyl-alpha-D-glucosamine 1-phosphate: step 1/1. It functions in the pathway bacterial outer membrane biogenesis; LPS lipid A biosynthesis. Functionally, catalyzes the last two sequential reactions in the de novo biosynthetic pathway for UDP-N-acetylglucosamine (UDP-GlcNAc). The C-terminal domain catalyzes the transfer of acetyl group from acetyl coenzyme A to glucosamine-1-phosphate (GlcN-1-P) to produce N-acetylglucosamine-1-phosphate (GlcNAc-1-P), which is converted into UDP-GlcNAc by the transfer of uridine 5-monophosphate (from uridine 5-triphosphate), a reaction catalyzed by the N-terminal domain. The sequence is that of Bifunctional protein GlmU from Streptococcus uberis (strain ATCC BAA-854 / 0140J).